Consider the following 306-residue polypeptide: Phosphoadenosine phosphosulfate reductase (306 aa).

Disordered stretches follow at residues 1 to 30 and 245 to 266; these read MPAK…VSGG and YHST…KGQA.

The protein belongs to the PAPS reductase family. CysH subfamily.

The enzyme catalyses [thioredoxin]-disulfide + sulfite + adenosine 3',5'-bisphosphate + 2 H(+) = [thioredoxin]-dithiol + 3'-phosphoadenylyl sulfate. Its pathway is sulfur metabolism; hydrogen sulfide biosynthesis; sulfite from sulfate: step 3/3. The NADP dependent reduction of PAPS into sulfite involves thioredoxin which probably plays the role of a thiol carrier. The chain is Phosphoadenosine phosphosulfate reductase (sA) from Emericella nidulans (strain FGSC A4 / ATCC 38163 / CBS 112.46 / NRRL 194 / M139) (Aspergillus nidulans).